We begin with the raw amino-acid sequence, 397 residues long: Putative nickel insertion protein (397 aa).

It belongs to the LarC family.

This chain is Putative nickel insertion protein, found in Synechococcus sp. (strain JA-2-3B'a(2-13)) (Cyanobacteria bacterium Yellowstone B-Prime).